The chain runs to 294 residues: Homoserine kinase (294 aa).

ATP is bound at residue 83-93 (PLARGLGSSAS).

This sequence belongs to the GHMP kinase family. Homoserine kinase subfamily.

Its subcellular location is the cytoplasm. It carries out the reaction L-homoserine + ATP = O-phospho-L-homoserine + ADP + H(+). It functions in the pathway amino-acid biosynthesis; L-threonine biosynthesis; L-threonine from L-aspartate: step 4/5. Functionally, catalyzes the ATP-dependent phosphorylation of L-homoserine to L-homoserine phosphate. In Oceanobacillus iheyensis (strain DSM 14371 / CIP 107618 / JCM 11309 / KCTC 3954 / HTE831), this protein is Homoserine kinase.